The sequence spans 388 residues: 1D-myo-inositol 2-acetamido-2-deoxy-alpha-D-glucopyranoside deacetylase (388 aa).

Zn(2+) contacts are provided by His-6, Asp-9, and His-144. The disordered stretch occupies residues 369-388 (LDQADEGAAHDTSEQSGQRR).

This sequence belongs to the MshB deacetylase family. Zn(2+) is required as a cofactor.

The enzyme catalyses 1D-myo-inositol 2-acetamido-2-deoxy-alpha-D-glucopyranoside + H2O = 1D-myo-inositol 2-amino-2-deoxy-alpha-D-glucopyranoside + acetate. Catalyzes the deacetylation of 1D-myo-inositol 2-acetamido-2-deoxy-alpha-D-glucopyranoside (GlcNAc-Ins) in the mycothiol biosynthesis pathway. This is 1D-myo-inositol 2-acetamido-2-deoxy-alpha-D-glucopyranoside deacetylase from Corynebacterium kroppenstedtii (strain DSM 44385 / JCM 11950 / CIP 105744 / CCUG 35717).